The chain runs to 576 residues: Interleukin-1 receptor type 1 (576 aa).

The N-terminal stretch at 1 to 19 (MENMKVLLGFICLIVPLLS) is a signal peptide. 3 consecutive Ig-like C2-type domains span residues 20–115 (LETD…ITMS), 121–217 (PGLC…RVIT), and 229–331 (PVIM…VRLV). At 20–338 (LETDKCTEYP…RLVYPVPDFK (319 aa)) the chain is on the extracellular side. 3 disulfide bridges follow: cysteine 25/cysteine 107, cysteine 46/cysteine 99, and cysteine 145/cysteine 199. Residues asparagine 63 and asparagine 103 are each glycosylated (N-linked (GlcNAc...) asparagine). N-linked (GlcNAc...) asparagine glycosylation is found at asparagine 236, asparagine 252, and asparagine 266. Cysteine 251 and cysteine 315 are disulfide-bonded. A helical transmembrane segment spans residues 339–359 (NYLIGGFAIFTATAVFCACIY). Over 360–576 (KVFKVDIVLW…LQAETHLPLG (217 aa)) the chain is Cytoplasmic. One can recognise a TIR domain in the interval 386–541 (RTYDAYVLYP…RFWKNLRYQM (156 aa)). Residue glutamate 473 is part of the active site. Position 499 is a phosphotyrosine (tyrosine 499). Threonine 556 bears the Phosphothreonine; by PKC mark.

The protein belongs to the interleukin-1 receptor family. In terms of assembly, the interleukin-1 receptor complex is a heterodimer of IL1R1 and IL1RAP. Interacts with PIK3R1. Interacts with IL1A. In terms of processing, a soluble form (sIL1R1) is probably produced by proteolytic cleavage at the cell surface (shedding). Rapidly phosphorylated on Tyr-499 in response to IL-1, which creates a SH2 binding site for the PI 3-kinase regulatory subunit PIK3R1.

The protein localises to the membrane. It localises to the cell membrane. It is found in the secreted. It carries out the reaction NAD(+) + H2O = ADP-D-ribose + nicotinamide + H(+). In terms of biological role, receptor for IL1A, IL1B and IL1RN. After binding to interleukin-1 associates with the coreceptor IL1RAP to form the high affinity interleukin-1 receptor complex which mediates interleukin-1-dependent activation of NF-kappa-B, MAPK and other pathways. Signaling involves the recruitment of adapter molecules such as TOLLIP, MYD88, and IRAK1 or IRAK2 via the respective TIR domains of the receptor/coreceptor subunits. Binds ligands with comparable affinity and binding of antagonist IL1RN prevents association with IL1RAP to form a signaling complex. Involved in IL1B-mediated costimulation of IFNG production from T-helper 1 (Th1) cells. The sequence is that of Interleukin-1 receptor type 1 (Il1r1) from Rattus norvegicus (Rat).